We begin with the raw amino-acid sequence, 139 residues long: Cystatin (139 aa).

An N-terminal signal peptide occupies residues 1–23 (MAGARGCVVLLAAALMLVGAVLG). The short motif at 76–80 (QLVSG) is the Secondary area of contact element. Cystine bridges form between Cys-94/Cys-104 and Cys-118/Cys-138. Residue Ser-103 is modified to Phosphoserine.

It belongs to the cystatin family.

The protein resides in the secreted. This protein binds tightly to and inhibits a variety of thiol proteases including ficin, papain, and cathepsins B, C, H, and L. Although isolated from egg white, it is also present in serum. The sequence is that of Cystatin from Gallus gallus (Chicken).